A 369-amino-acid chain; its full sequence is MVKLSIVLTPRFLSHDQGQLTKELQQHVKSVTCPCEYLRKVINTLADHRHRGTDFGGSPWLLIITVFLRSYKFAISLCTSYLCVSFLKTIFPSQNGHDGSTDVQQRARRSNRRRQEGIKIVLEDIFTLWRQVETKVRAKICKMKVTTKVNRHDKINGKRKTAKEHLRKLSMKEREHGEKERQVSEAEENGKLDMKEIHTYMEMFQRAQALRRRAEDYYRCKITPSARKPLCNRVRMAAAEHRHSSGLPYWPYLTAETLKNRMGHQPPPPTQQHSIIDNSLSLKTPPECLLTPLPPSALPSADDNLKTPAECLLYPLPPSADDNLKTPPECLLTPLPPSAPPSADDNLKTPPKCVCSLPFHPQRMIISRN.

Positions 325–346 (KTPPECLLTPLPPSAPPSADDN) are disordered.

It belongs to the NPIP family.

The polypeptide is Nuclear pore complex-interacting protein family member A2 (NPIPA2) (Homo sapiens (Human)).